Here is a 289-residue protein sequence, read N- to C-terminus: ATP synthase subunit a (289 aa).

6 helical membrane passes run 43-63 (AFHL…LFIF), 103-123 (VIAP…AVDL), 160-180 (FCVF…GGFI), 193-213 (IFVQ…TLIA), 232-252 (VFIL…GLGV), and 259-279 (AVFH…LTIV).

This sequence belongs to the ATPase A chain family. As to quaternary structure, F-type ATPases have 2 components, CF(1) - the catalytic core - and CF(0) - the membrane proton channel. CF(1) has five subunits: alpha(3), beta(3), gamma(1), delta(1), epsilon(1). CF(0) has three main subunits: a(1), b(2) and c(9-12). The alpha and beta chains form an alternating ring which encloses part of the gamma chain. CF(1) is attached to CF(0) by a central stalk formed by the gamma and epsilon chains, while a peripheral stalk is formed by the delta and b chains.

The protein resides in the cell inner membrane. Functionally, key component of the proton channel; it plays a direct role in the translocation of protons across the membrane. The protein is ATP synthase subunit a of Pseudomonas putida (strain GB-1).